The sequence spans 199 residues: Small ribosomal subunit protein uS5 (199 aa).

A disordered region spans residues 1–28 (MARTPNTDRRQRGGDDQRNRSPRSDERD). The S5 DRBM domain maps to 31–94 (FLDKLVHINR…DQAKRTMIKV (64 aa)).

The protein belongs to the universal ribosomal protein uS5 family. Part of the 30S ribosomal subunit. Contacts proteins S4 and S8.

Functionally, with S4 and S12 plays an important role in translational accuracy. In terms of biological role, located at the back of the 30S subunit body where it stabilizes the conformation of the head with respect to the body. The chain is Small ribosomal subunit protein uS5 from Rhodospirillum rubrum (strain ATCC 11170 / ATH 1.1.1 / DSM 467 / LMG 4362 / NCIMB 8255 / S1).